The following is a 653-amino-acid chain: ATP-dependent zinc metalloprotease FtsH 1 (653 aa).

Residues 1-20 (MPENKNDKENKNDKENKNTK) form a disordered region. Residues 1–30 (MPENKNDKENKNDKENKNTKEEKKKVKFSN) are Cytoplasmic-facing. Residues 31-51 (IIWVYIIFAVFFIGALISLNW) form a helical membrane-spanning segment. The Periplasmic segment spans residues 52–126 (ENNPIISYSE…EYVESVGTKW (75 aa)). The chain crosses the membrane as a helical span at residues 127-147 (WFGLLINIIPIVVMVLFFFWL). The Cytoplasmic portion of the chain corresponds to 148–653 (YRSASAGARS…VVNHVNYQPV (506 aa)). 219–226 (GPPGTGKT) lines the ATP pocket. Residue H441 participates in Zn(2+) binding. E442 is a catalytic residue. Positions 445 and 518 each coordinate Zn(2+).

This sequence in the central section; belongs to the AAA ATPase family. The protein in the C-terminal section; belongs to the peptidase M41 family. As to quaternary structure, homohexamer. Requires Zn(2+) as cofactor.

It is found in the cell inner membrane. Its function is as follows. Acts as a processive, ATP-dependent zinc metallopeptidase for both cytoplasmic and membrane proteins. Plays a role in the quality control of integral membrane proteins. The polypeptide is ATP-dependent zinc metalloprotease FtsH 1 (Petrotoga mobilis (strain DSM 10674 / SJ95)).